Consider the following 244-residue polypeptide: Phosphoadenosine 5'-phosphosulfate reductase (244 aa).

The active-site Nucleophile; cysteine thiosulfonate intermediate is the C239.

Belongs to the PAPS reductase family. CysH subfamily.

Its subcellular location is the cytoplasm. It carries out the reaction [thioredoxin]-disulfide + sulfite + adenosine 3',5'-bisphosphate + 2 H(+) = [thioredoxin]-dithiol + 3'-phosphoadenylyl sulfate. It participates in sulfur metabolism; hydrogen sulfide biosynthesis; sulfite from sulfate: step 3/3. Its function is as follows. Catalyzes the formation of sulfite from phosphoadenosine 5'-phosphosulfate (PAPS) using thioredoxin as an electron donor. This Shigella flexneri protein is Phosphoadenosine 5'-phosphosulfate reductase.